Here is a 150-residue protein sequence, read N- to C-terminus: MPVMKQLGPAQPKKRLDRGALSISAPLGDFRHTLHVGRGGDAFGDTSFLSRHGGGPPPEPGAPPVVAPHSVAPPAAPQPPVAVPSPADPLLSFHLDLGPSMLDAVLGVMDAERSETTATKPDGDAHPRVQHPKTRCCSNADLQLDDVIGL.

Disordered regions lie at residues 1–20, 34–89, and 114–133; these read MPVM…DRGA, LHVG…PADP, and SETT…QHPK. The CRIB domain occupies 23-37; that stretch reads ISAPLGDFRHTLHVG. The residue at position 38 (Arg-38) is an Omega-N-methylarginine. Composition is skewed to pro residues over residues 55–66 and 74–87; these read GPPPEPGAPPVV and PAAP…PSPA. Positions 114-127 are enriched in basic and acidic residues; it reads SETTATKPDGDAHP.

This sequence belongs to the BORG/CEP family. In terms of assembly, interacts with CDC42 in a GTP-dependent manner, and with SEPT7. In terms of tissue distribution, highly expressed in the skeletal muscle.

Its subcellular location is the endomembrane system. The protein localises to the cytoplasm. It is found in the cytoskeleton. Functionally, probably involved in the organization of the actin cytoskeleton. May act downstream of CDC42 to induce actin filament assembly leading to cell shape changes. Induces pseudopodia formation in fibroblasts. Inhibits MAPK8 independently of CDC42 binding. Controls septin organization and this effect is negatively regulated by CDC42. This is Cdc42 effector protein 5 (Cdc42ep5) from Mus musculus (Mouse).